Consider the following 485-residue polypeptide: Arginine biosynthesis bifunctional protein ArgJ, mitochondrial (485 aa).

4 residues coordinate substrate: Thr185, Lys214, Thr225, and Glu315. Thr225 (nucleophile) is an active-site residue.

It belongs to the ArgJ family. Heterodimer of an alpha and a beta chain. Post-translationally, the alpha and beta chains are autoproteolytically processed from a single precursor protein within the mitochondrion.

It localises to the mitochondrion matrix. It catalyses the reaction N(2)-acetyl-L-ornithine + L-glutamate = N-acetyl-L-glutamate + L-ornithine. The catalysed reaction is L-glutamate + acetyl-CoA = N-acetyl-L-glutamate + CoA + H(+). The protein operates within amino-acid biosynthesis; L-arginine biosynthesis; L-ornithine and N-acetyl-L-glutamate from L-glutamate and N(2)-acetyl-L-ornithine (cyclic): step 1/1. Its pathway is amino-acid biosynthesis; L-arginine biosynthesis; N(2)-acetyl-L-ornithine from L-glutamate: step 1/4. Functionally, catalyzes two activities which are involved in the cyclic version of arginine biosynthesis: the synthesis of acetylglutamate from glutamate and acetyl-CoA, and of ornithine by transacetylation between acetylornithine and glutamate. The protein is Arginine biosynthesis bifunctional protein ArgJ, mitochondrial of Penicillium rubens (strain ATCC 28089 / DSM 1075 / NRRL 1951 / Wisconsin 54-1255) (Penicillium chrysogenum).